The chain runs to 524 residues: Cytochrome P450 monooxygenase patH (524 aa).

The Cytoplasmic portion of the chain corresponds to 1 to 4 (MEPM). Residues 5-23 (LLLILVAAVVLLFVRWAFV) form a helical membrane-spanning segment. The Lumenal portion of the chain corresponds to 24–524 (YGHRTSNMPK…KEVFSQFTEG (501 aa)). N-linked (GlcNAc...) asparagine glycosylation is present at N191. Position 442 (C442) interacts with heme. A glycan (N-linked (GlcNAc...) asparagine) is linked at N499.

Belongs to the cytochrome P450 family. Heme serves as cofactor.

It localises to the endoplasmic reticulum membrane. The catalysed reaction is 3-methylphenol + reduced [NADPH--hemoprotein reductase] + O2 = 3-hydroxybenzyl alcohol + oxidized [NADPH--hemoprotein reductase] + H2O + H(+). It functions in the pathway mycotoxin biosynthesis; patulin biosynthesis. Its function is as follows. Cytochrome P450 monooxygenase; part of the gene cluster that mediates the biosynthesis of patulin, an acetate-derived tetraketide mycotoxin produced by several fungal species that shows antimicrobial properties against several bacteria. PatH catalyzes the conversion of m-cresol into m-hydroxybenzyl alcohol. The pathway begins with the synthesis of 6-methylsalicylic acid by the polyketide synthase (PKS) patK via condensation of acetate and malonate units. The 6-methylsalicylic acid decarboxylase patG then catalyzes the decarboxylation of 6-methylsalicylic acid to yield m-cresol (also known as 3-methylphenol). These first reactions occur in the cytosol. The intermediate m-cresol is then transported into the endoplasmic reticulum where the cytochrome P450 monooxygenase patH converts it to m-hydroxybenzyl alcohol, which is further converted to gentisyl alcohol by the cytochrome P450 monooxygenase patI. The oxidoreductases patJ and patO further convert gentisyl alcohol to isoepoxydon in the vacuole. PatN catalyzes then the transformation of isoepoxydon into phyllostine. The cluster protein patF is responsible for the conversion from phyllostine to neopatulin whereas the alcohol dehydrogenase patD converts neopatulin to E-ascladiol. The steps between isoepoxydon and E-ascladiol occur in the cytosol, and E-ascladiol is probably secreted to the extracellular space by one of the cluster-specific transporters patC or patM. Finally, the secreted patulin synthase patE catalyzes the conversion of E-ascladiol to patulin. This is Cytochrome P450 monooxygenase patH from Aspergillus clavatus (strain ATCC 1007 / CBS 513.65 / DSM 816 / NCTC 3887 / NRRL 1 / QM 1276 / 107).